The sequence spans 492 residues: Probable cobyric acid synthase (492 aa).

One can recognise a GATase cobBQ-type domain in the interval 252 to 444 (PIEVNIVKFS…FHGILENFEF (193 aa)). C330 functions as the Nucleophile in the catalytic mechanism. The active site involves H436.

This sequence belongs to the CobB/CobQ family. CobQ subfamily.

It functions in the pathway cofactor biosynthesis; adenosylcobalamin biosynthesis. Functionally, catalyzes amidations at positions B, D, E, and G on adenosylcobyrinic A,C-diamide. NH(2) groups are provided by glutamine, and one molecule of ATP is hydrogenolyzed for each amidation. In Methanococcus maripaludis (strain C6 / ATCC BAA-1332), this protein is Probable cobyric acid synthase.